The chain runs to 295 residues: Fatty acyl-CoA reductase (295 aa).

Thr-21–Gly-28 provides a ligand contact to NADP(+). Ser-153 lines the substrate pocket. The Proton acceptor role is filled by Tyr-166.

This sequence belongs to the short-chain dehydrogenases/reductases (SDR) family.

It carries out the reaction hexadecanal + NADP(+) + CoA = hexadecanoyl-CoA + NADPH + H(+). Catalyzes the NADPH-dependent reduction of long chain acyl-CoA (with chain lengths of 14 to 22 carbons) to the corresponding aldehyde. The chain is Fatty acyl-CoA reductase (acr1) from Acinetobacter baylyi (strain ATCC 33305 / BD413 / ADP1).